The following is a 388-amino-acid chain: Succinate--CoA ligase [ADP-forming] subunit beta (388 aa).

In terms of domain architecture, ATP-grasp spans 9-244 (KQLFKEFGLP…PSQDDAREAE (236 aa)). ATP-binding positions include Lys-46, 53-55 (GRG), Glu-99, Thr-102, and Glu-107. Mg(2+)-binding residues include Asn-199 and Asp-213. Residues Asn-264 and 321-323 (GIV) contribute to the substrate site.

The protein belongs to the succinate/malate CoA ligase beta subunit family. In terms of assembly, heterotetramer of two alpha and two beta subunits. Mg(2+) serves as cofactor.

The enzyme catalyses succinate + ATP + CoA = succinyl-CoA + ADP + phosphate. It catalyses the reaction GTP + succinate + CoA = succinyl-CoA + GDP + phosphate. It functions in the pathway carbohydrate metabolism; tricarboxylic acid cycle; succinate from succinyl-CoA (ligase route): step 1/1. Its function is as follows. Succinyl-CoA synthetase functions in the citric acid cycle (TCA), coupling the hydrolysis of succinyl-CoA to the synthesis of either ATP or GTP and thus represents the only step of substrate-level phosphorylation in the TCA. The beta subunit provides nucleotide specificity of the enzyme and binds the substrate succinate, while the binding sites for coenzyme A and phosphate are found in the alpha subunit. This Idiomarina loihiensis (strain ATCC BAA-735 / DSM 15497 / L2-TR) protein is Succinate--CoA ligase [ADP-forming] subunit beta.